We begin with the raw amino-acid sequence, 183 residues long: Bifunctional protein PyrR (183 aa).

Residues 100–112 (VILVDDVLYTGRT) carry the PRPP-binding motif.

The protein belongs to the purine/pyrimidine phosphoribosyltransferase family. PyrR subfamily.

The catalysed reaction is UMP + diphosphate = 5-phospho-alpha-D-ribose 1-diphosphate + uracil. Regulates the transcription of the pyrimidine nucleotide (pyr) operon in response to exogenous pyrimidines. In terms of biological role, also displays a weak uracil phosphoribosyltransferase activity which is not physiologically significant. The chain is Bifunctional protein PyrR from Deinococcus deserti (strain DSM 17065 / CIP 109153 / LMG 22923 / VCD115).